Reading from the N-terminus, the 461-residue chain is Diacylglycerol O-acyltransferase 1 (461 aa).

The segment at 1-38 (MQDSMDDSLREAEGRQDDSEVSSGTTLGSSTPEDSGVT) is disordered. The Cytoplasmic portion of the chain corresponds to 1–112 (MQDSMDDSLR…TLVVAWHTSS (112 aa)). Over residues 7–18 (DSLREAEGRQDD) the composition is skewed to basic and acidic residues. Residues 21-33 (VSSGTTLGSSTPE) show a composition bias toward polar residues. Residues 113-133 (FIYMTVLVLFLAANPLMWWFM) traverse the membrane as a helical segment. Residues 134–230 (VPYMVYYVWN…ARPQVATGPR (97 aa)) lie on the Lumenal side of the membrane. The chain crosses the membrane as a helical span at residues 231 to 251 (YIFGYHPHGVGALGAFGAIAT). Residues 252–258 (EGCNWSK) lie on the Cytoplasmic side of the membrane. A helical transmembrane segment spans residues 259–279 (VFAGIPACLCTLVNQFQIPIY). The Lumenal segment spans residues 280–332 (RDYLLGLGCTSVARKNVLKVLEQNYSVCIVVGGAQEALLSRVGSTELVLNKRK). Residues 333 to 353 (GFIKLALETGNVNLVPIYAFG) traverse the membrane as a helical segment. Topologically, residues 354–461 (ETDCFNVLDT…YAGKELKIVE (108 aa)) are cytoplasmic.

The protein belongs to the diacylglycerol acyltransferase family.

The protein resides in the lipid droplet. The protein localises to the endoplasmic reticulum membrane. It carries out the reaction an acyl-CoA + a 1,2-diacyl-sn-glycerol = a triacyl-sn-glycerol + CoA. The catalysed reaction is a 2-acylglycerol + an acyl-CoA = a 1,2-diacyl-sn-glycerol + CoA. It functions in the pathway glycerolipid metabolism; triacylglycerol biosynthesis. In terms of biological role, catalyzes the terminal and only committed step in triacylglycerol (TAG) synthesis by using diacylglycerol (DAG) and fatty acyl-CoA as substrates. Required for storage lipid synthesis. Major DAG esterifying enzyme in stationary phase when TAG production is particularly active. Involved in lipid particle synthesis from the endoplasmic reticulum, promoting localized TAG production at discrete ER subdomains. This Eremothecium gossypii (strain ATCC 10895 / CBS 109.51 / FGSC 9923 / NRRL Y-1056) (Yeast) protein is Diacylglycerol O-acyltransferase 1 (DGA1).